The primary structure comprises 208 residues: Large ribosomal subunit protein uL4 (208 aa).

It belongs to the universal ribosomal protein uL4 family. Part of the 50S ribosomal subunit.

Its function is as follows. One of the primary rRNA binding proteins, this protein initially binds near the 5'-end of the 23S rRNA. It is important during the early stages of 50S assembly. It makes multiple contacts with different domains of the 23S rRNA in the assembled 50S subunit and ribosome. Forms part of the polypeptide exit tunnel. In Anaplasma marginale (strain Florida), this protein is Large ribosomal subunit protein uL4.